A 326-amino-acid chain; its full sequence is tRNA-modifying protein YgfZ (326 aa).

Folate is bound by residues Trp27 and Trp189.

Belongs to the tRNA-modifying YgfZ family.

Its subcellular location is the cytoplasm. Functionally, folate-binding protein involved in regulating the level of ATP-DnaA and in the modification of some tRNAs. It is probably a key factor in regulatory networks that act via tRNA modification, such as initiation of chromosomal replication. The sequence is that of tRNA-modifying protein YgfZ from Salmonella paratyphi C (strain RKS4594).